Consider the following 166-residue polypeptide: Lipoprotein signal peptidase (166 aa).

Transmembrane regions (helical) follow at residues 11–31 (LNLV…LYIL), 42–62 (IYIT…AFGL), 69–89 (VIYN…IFMM), and 99–119 (FFAL…VYTA). Residues D122 and D140 contribute to the active site. The helical transmembrane segment at 133–153 (WFVFNVADIFITIGVFCLILV) threads the bilayer.

Belongs to the peptidase A8 family.

It localises to the cell inner membrane. The enzyme catalyses Release of signal peptides from bacterial membrane prolipoproteins. Hydrolyzes -Xaa-Yaa-Zaa-|-(S,diacylglyceryl)Cys-, in which Xaa is hydrophobic (preferably Leu), and Yaa (Ala or Ser) and Zaa (Gly or Ala) have small, neutral side chains.. Its pathway is protein modification; lipoprotein biosynthesis (signal peptide cleavage). Functionally, this protein specifically catalyzes the removal of signal peptides from prolipoproteins. The polypeptide is Lipoprotein signal peptidase (Pelagibacter ubique (strain HTCC1062)).